The following is a 327-amino-acid chain: Cytochrome P450 2C42 (327 aa).

Heme is bound at residue cysteine 272.

This sequence belongs to the cytochrome P450 family. The cofactor is heme.

Its subcellular location is the endoplasmic reticulum membrane. The protein localises to the microsome membrane. It catalyses the reaction an organic molecule + reduced [NADPH--hemoprotein reductase] + O2 = an alcohol + oxidized [NADPH--hemoprotein reductase] + H2O + H(+). Cytochromes P450 are a group of heme-thiolate monooxygenases. In liver microsomes, this enzyme is involved in an NADPH-dependent electron transport pathway. It oxidizes a variety of structurally unrelated compounds, including steroids, fatty acids, and xenobiotics. This is Cytochrome P450 2C42 (CYP2C42) from Sus scrofa (Pig).